An 846-amino-acid polypeptide reads, in one-letter code: Protein arginine N-methyltransferase 9 (846 aa).

TPR repeat units follow at residues 25-58, 67-100, and 101-134; these read VARSLQSAEHCLGDQDFGTAYAHYLLVLSLAPEL, QYTLFKWAEELHALSRIQDLLGCYEQALELFPDD, and EVICNSMGEHLFRMGFRDEAAGYFHKAVKLNPDF. SAM-dependent MTase PRMT-type domains lie at 137–466 and 530–846; these read AKEN…YLRI and NIPY…AVKP.

Belongs to the class I-like SAM-binding methyltransferase superfamily. Protein arginine N-methyltransferase family. In terms of assembly, found in a complex with PRMT9, SF3B2 and SF3B4. Interacts with SF3B2.

The protein localises to the cytoplasm. It carries out the reaction L-arginyl-[protein] + 2 S-adenosyl-L-methionine = N(omega),N(omega)'-dimethyl-L-arginyl-[protein] + 2 S-adenosyl-L-homocysteine + 2 H(+). Its function is as follows. Arginine methyltransferase that can both catalyze the formation of omega-N monomethylarginine (MMA) and symmetrical dimethylarginine (sDMA). Specifically mediates the symmetrical dimethylation of SF3B2. Involved in the regulation of alternative splicing of pre-mRNA. This chain is Protein arginine N-methyltransferase 9 (Prmt9), found in Mus musculus (Mouse).